The primary structure comprises 349 residues: Protein BPS1, chloroplastic (349 aa).

The N-terminal 43 residues, 1–43 (MARPQDPPRGFFPFGNPFKNLSSKNSVLSSKLLPLLNNFETNL), are a transit peptide targeting the chloroplast.

In terms of tissue distribution, expressed in roots, hypocotyls, cotyledons, leaves, flowers and siliques.

The protein localises to the plastid. It localises to the chloroplast. Required for normal root and shoot development. Prevents constitutive production of a root mobile carotenoid-derived signaling compound that is capable of arresting shoot and leaf development. The polypeptide is Protein BPS1, chloroplastic (Arabidopsis thaliana (Mouse-ear cress)).